A 200-amino-acid polypeptide reads, in one-letter code: dITP/XTP pyrophosphatase (200 aa).

7–12 (TQNKRK) contacts substrate. The Mg(2+) site is built by Glu42 and Asp71. Catalysis depends on Asp71, which acts as the Proton acceptor. Substrate contacts are provided by residues Ser72, 156–159 (FGYD), Lys179, and 184–185 (HR).

Belongs to the HAM1 NTPase family. In terms of assembly, homodimer. Requires Mg(2+) as cofactor.

It catalyses the reaction XTP + H2O = XMP + diphosphate + H(+). It carries out the reaction dITP + H2O = dIMP + diphosphate + H(+). The catalysed reaction is ITP + H2O = IMP + diphosphate + H(+). Pyrophosphatase that catalyzes the hydrolysis of nucleoside triphosphates to their monophosphate derivatives, with a high preference for the non-canonical purine nucleotides XTP (xanthosine triphosphate), dITP (deoxyinosine triphosphate) and ITP. Seems to function as a house-cleaning enzyme that removes non-canonical purine nucleotides from the nucleotide pool, thus preventing their incorporation into DNA/RNA and avoiding chromosomal lesions. This is dITP/XTP pyrophosphatase from Malacoplasma penetrans (strain HF-2) (Mycoplasma penetrans).